The primary structure comprises 215 residues: FBD domain-containing protein At3g58975 (215 aa).

The FBD domain occupies R122 to L199.

This Arabidopsis thaliana (Mouse-ear cress) protein is FBD domain-containing protein At3g58975.